Reading from the N-terminus, the 338-residue chain is Ketol-acid reductoisomerase (NADP(+)) (338 aa).

The region spanning 1-181 (MKVFYDKDCD…GGGRTGIIET (181 aa)) is the KARI N-terminal Rossmann domain. Residues 24–27 (YGSQ), arginine 47, serine 50, threonine 52, and 82–85 (DEFQ) each bind NADP(+). Residue histidine 107 is part of the active site. An NADP(+)-binding site is contributed by glycine 133. A KARI C-terminal knotted domain is found at 182-327 (TFKDETETDL…EQLRSMMPWI (146 aa)). The Mg(2+) site is built by aspartate 190, glutamate 194, glutamate 226, and glutamate 230. Serine 251 serves as a coordination point for substrate.

The protein belongs to the ketol-acid reductoisomerase family. Requires Mg(2+) as cofactor.

The enzyme catalyses (2R)-2,3-dihydroxy-3-methylbutanoate + NADP(+) = (2S)-2-acetolactate + NADPH + H(+). It catalyses the reaction (2R,3R)-2,3-dihydroxy-3-methylpentanoate + NADP(+) = (S)-2-ethyl-2-hydroxy-3-oxobutanoate + NADPH + H(+). It participates in amino-acid biosynthesis; L-isoleucine biosynthesis; L-isoleucine from 2-oxobutanoate: step 2/4. It functions in the pathway amino-acid biosynthesis; L-valine biosynthesis; L-valine from pyruvate: step 2/4. Involved in the biosynthesis of branched-chain amino acids (BCAA). Catalyzes an alkyl-migration followed by a ketol-acid reduction of (S)-2-acetolactate (S2AL) to yield (R)-2,3-dihydroxy-isovalerate. In the isomerase reaction, S2AL is rearranged via a Mg-dependent methyl migration to produce 3-hydroxy-3-methyl-2-ketobutyrate (HMKB). In the reductase reaction, this 2-ketoacid undergoes a metal-dependent reduction by NADPH to yield (R)-2,3-dihydroxy-isovalerate. This Pseudomonas entomophila (strain L48) protein is Ketol-acid reductoisomerase (NADP(+)).